Reading from the N-terminus, the 276-residue chain is Large ribosomal subunit protein uL2 (276 aa).

The interval 224-276 is disordered; the sequence is AMNPVDHPLGGGEGKSSGGRHPVTPWGKPTKGYKTRNKKKPSSKLIVKRRGQK. Positions 254 to 276 are enriched in basic residues; sequence KGYKTRNKKKPSSKLIVKRRGQK.

This sequence belongs to the universal ribosomal protein uL2 family. As to quaternary structure, part of the 50S ribosomal subunit. Forms a bridge to the 30S subunit in the 70S ribosome.

One of the primary rRNA binding proteins. Required for association of the 30S and 50S subunits to form the 70S ribosome, for tRNA binding and peptide bond formation. It has been suggested to have peptidyltransferase activity; this is somewhat controversial. Makes several contacts with the 16S rRNA in the 70S ribosome. This Solidesulfovibrio magneticus (strain ATCC 700980 / DSM 13731 / RS-1) (Desulfovibrio magneticus) protein is Large ribosomal subunit protein uL2.